A 68-amino-acid polypeptide reads, in one-letter code: uncharacterized protein (68 aa).

The chain crosses the membrane as a helical span at residues 24–44 (AHICKCIAMFFVVAGVVLMFF).

The protein resides in the endoplasmic reticulum. It localises to the membrane. This is an uncharacterized protein from Saccharomyces cerevisiae (strain ATCC 204508 / S288c) (Baker's yeast).